We begin with the raw amino-acid sequence, 108 residues long: Peptidyl-prolyl cis-trans isomerase FKBP1B (108 aa).

The PPIase FKBP-type domain maps to 20-108; it reads GQICVVHYTG…IFDVELLSLE (89 aa).

It belongs to the FKBP-type PPIase family. FKBP1 subfamily. As to quaternary structure, identified in a complex composed of RYR2, FKBP1B, PKA catalytic subunit, PRKAR2A, AKAP6, and the protein phosphatases PP2A and PP1. Interacts directly with RYR2.

Its subcellular location is the cytoplasm. It is found in the sarcoplasmic reticulum. The catalysed reaction is [protein]-peptidylproline (omega=180) = [protein]-peptidylproline (omega=0). Inhibited by both FK506 and rapamycin. Has the potential to contribute to the immunosuppressive and toxic effects of FK506 and rapamycin. PPIases accelerate the folding of proteins. It catalyzes the cis-trans isomerization of proline imidic peptide bonds in oligopeptides. This chain is Peptidyl-prolyl cis-trans isomerase FKBP1B (Fkbp1b), found in Mus musculus (Mouse).